Here is a 346-residue protein sequence, read N- to C-terminus: Integrin beta-1-binding protein 2 (346 aa).

Residues C5, C10, C24, and H27 each contribute to the Zn(2+) site. A CHORD 1 domain is found at 5 to 64 (CHNKGCGQHFDPQTNLPDSCCHHPGVPVFHDALKGWSCCRKRTVDFSEFLNIKGCTVGPH). Positions 28-31 (PGVP) match the SH3-binding motif. 4 residues coordinate Zn(2+): C42, C43, C59, and H64. An SH3-binding motif is present at residues 70–78 (PEAPQPEGP). Residues 70–113 (PEAPQPEGPATSSSLLEQKPPNTIPKSAETLRRERPKSDLPPKL) are disordered. Over residues 79-94 (ATSSSLLEQKPPNTIP) the composition is skewed to polar residues. Over residues 98-109 (ETLRRERPKSDL) the composition is skewed to basic and acidic residues. Zn(2+) is bound by residues C150 and C155. Residues 150 to 209 (CQNPGCDAVYQGSESDATPCTYHPGAPRFHEGMKSWSCCGIQTLDFGVFLAQPGCRVGRH) form the CHORD 2 domain. An SH2-binding motif is present at residues 159–162 (YQGS). C169 and H172 together coordinate Zn(2+). The SH3-binding signature appears at 173–176 (PGAP). Zn(2+)-binding residues include C187, C188, C204, and H209. A CS domain is found at 216-305 (LASCRHDWHQ…ADPGFWAQLE (90 aa)). The SH2-binding motif lies at 235 to 238 (YGQI). The interval 311-346 (AEKSKSGVGLEMDEEESEDSDDDLSWTEEEEEAMGE) is disordered. The span at 321–346 (EMDEEESEDSDDDLSWTEEEEEAMGE) shows a compositional bias: acidic residues.

In terms of assembly, interacts with beta-1 integrin subunit. This interaction is regulated by divalent cations, and it occurs only in absence of calcium.

May play a role during maturation and/or organization of muscles cells. In Sus scrofa (Pig), this protein is Integrin beta-1-binding protein 2 (ITGB1BP2).